Reading from the N-terminus, the 216-residue chain is Uracil phosphoribosyltransferase (216 aa).

Residues arginine 85, arginine 110, and 135–143 (DPMVATGYS) contribute to the 5-phospho-alpha-D-ribose 1-diphosphate site. Uracil is bound by residues isoleucine 200 and 205–207 (GDA). 5-phospho-alpha-D-ribose 1-diphosphate is bound at residue aspartate 206.

It belongs to the UPRTase family. Mg(2+) serves as cofactor.

It carries out the reaction UMP + diphosphate = 5-phospho-alpha-D-ribose 1-diphosphate + uracil. The protein operates within pyrimidine metabolism; UMP biosynthesis via salvage pathway; UMP from uracil: step 1/1. Allosterically activated by GTP. In terms of biological role, catalyzes the conversion of uracil and 5-phospho-alpha-D-ribose 1-diphosphate (PRPP) to UMP and diphosphate. This chain is Uracil phosphoribosyltransferase, found in Ralstonia pickettii (strain 12J).